We begin with the raw amino-acid sequence, 66 residues long: MFKEYKIYKFFEQVKQETYKVVWPTRKELVASTLVVVVAVFIFSLICLVLDYSIHNIMQLLLNIGK.

The chain crosses the membrane as a helical span at residues 29–49; sequence LVASTLVVVVAVFIFSLICLV.

Belongs to the SecE/SEC61-gamma family. Component of the Sec protein translocase complex. Heterotrimer consisting of SecY, SecE and SecG subunits. The heterotrimers can form oligomers, although 1 heterotrimer is thought to be able to translocate proteins. Interacts with the ribosome. Interacts with SecDF, and other proteins may be involved. Interacts with SecA.

The protein resides in the cell inner membrane. Functionally, essential subunit of the Sec protein translocation channel SecYEG. Clamps together the 2 halves of SecY. May contact the channel plug during translocation. The chain is Protein translocase subunit SecE from Rickettsia felis (strain ATCC VR-1525 / URRWXCal2) (Rickettsia azadi).